A 981-amino-acid polypeptide reads, in one-letter code: Proline-rich transmembrane protein 3 (981 aa).

The N-terminal stretch at methionine 1–glycine 27 is a signal peptide. Topologically, residues arginine 28–histidine 474 are extracellular. Disordered regions lie at residues proline 43–arginine 107 and proline 169–proline 457. Residues proline 65–glutamate 85 show a composition bias toward basic and acidic residues. Residues serine 297–serine 302 form an O-glycosylated at one site region. Residue serine 329 is glycosylated (O-linked (GalNAc...) serine). The segment covering alanine 331–arginine 340 has biased composition (basic and acidic residues). O-linked (GalNAc...) threonine glycosylation occurs at threonine 363. The N-linked (GlcNAc...) asparagine glycan is linked to asparagine 379. Polar residues predominate over residues alanine 411–alanine 427. Low complexity predominate over residues threonine 437–proline 457. The helical transmembrane segment at valine 475–alanine 495 threads the bilayer. Residues alanine 496–arginine 501 are Cytoplasmic-facing. A helical membrane pass occupies residues leucine 502–leucine 522. The Extracellular portion of the chain corresponds to threonine 523–asparagine 542. The chain crosses the membrane as a helical span at residues leucine 543–glycine 563. The Cytoplasmic portion of the chain corresponds to leucine 564–asparagine 570. A helical transmembrane segment spans residues proline 571–leucine 591. Residues serine 592–asparagine 598 lie on the Extracellular side of the membrane. Residues leucine 599 to leucine 619 form a helical membrane-spanning segment. At cysteine 620–arginine 638 the chain is on the cytoplasmic side. A helical transmembrane segment spans residues leucine 639–leucine 659. Residues tryptophan 660 to histidine 679 lie on the Extracellular side of the membrane. Residues phenylalanine 680–alanine 700 traverse the membrane as a helical segment. Residues alanine 701–leucine 981 are Cytoplasmic-facing. The disordered stretch occupies residues alanine 759 to proline 807. A compositionally biased stretch (low complexity) spans alanine 765–arginine 780. Serine 777 bears the Phosphoserine mark. Arginine 780 is modified (omega-N-methylarginine). Phosphoserine is present on residues serine 789, serine 798, serine 808, serine 815, serine 854, serine 874, serine 902, serine 903, and serine 911. Residues leucine 836–serine 865 form a disordered region. The disordered stretch occupies residues threonine 937 to leucine 981. Residues arginine 972–leucine 981 are compositionally biased toward polar residues.

Its subcellular location is the membrane. The chain is Proline-rich transmembrane protein 3 (PRRT3) from Homo sapiens (Human).